The following is a 66-amino-acid chain: Large ribosomal subunit protein uL29c (66 aa).

This sequence belongs to the universal ribosomal protein uL29 family.

The protein resides in the plastid. It localises to the chloroplast. The protein is Large ribosomal subunit protein uL29c of Gracilaria tenuistipitata var. liui (Red alga).